We begin with the raw amino-acid sequence, 330 residues long: Putative UV-damage endonuclease (330 aa).

Belongs to the uve1/UvsE family.

Its subcellular location is the virion. In terms of biological role, endonuclease for the repair of UV-irradiated DNA. The chain is Putative UV-damage endonuclease from Acanthamoeba polyphaga mimivirus (APMV).